The primary structure comprises 1090 residues: UPF0507 protein SCRG_01893 (1090 aa).

Positions 289–436 constitute a VPS9 domain; sequence FSVNQLLTDF…FEDFNKNTGN (148 aa).

The protein belongs to the UPF0507 family.

The sequence is that of UPF0507 protein SCRG_01893 from Saccharomyces cerevisiae (strain RM11-1a) (Baker's yeast).